A 229-amino-acid chain; its full sequence is 7-cyano-7-deazaguanine synthase (229 aa).

15-25 (LSGGLDSTTCL) provides a ligand contact to ATP. Zn(2+)-binding residues include C192, C202, C205, and C208.

The protein belongs to the QueC family. Zn(2+) serves as cofactor.

The catalysed reaction is 7-carboxy-7-deazaguanine + NH4(+) + ATP = 7-cyano-7-deazaguanine + ADP + phosphate + H2O + H(+). It participates in purine metabolism; 7-cyano-7-deazaguanine biosynthesis. Its function is as follows. Catalyzes the ATP-dependent conversion of 7-carboxy-7-deazaguanine (CDG) to 7-cyano-7-deazaguanine (preQ(0)). This Acinetobacter baylyi (strain ATCC 33305 / BD413 / ADP1) protein is 7-cyano-7-deazaguanine synthase.